The primary structure comprises 338 residues: Nicotinate-nucleotide--dimethylbenzimidazole phosphoribosyltransferase (338 aa).

E305 functions as the Proton acceptor in the catalytic mechanism.

It belongs to the CobT family.

The catalysed reaction is 5,6-dimethylbenzimidazole + nicotinate beta-D-ribonucleotide = alpha-ribazole 5'-phosphate + nicotinate + H(+). Its pathway is nucleoside biosynthesis; alpha-ribazole biosynthesis; alpha-ribazole from 5,6-dimethylbenzimidazole: step 1/2. Catalyzes the synthesis of alpha-ribazole-5'-phosphate from nicotinate mononucleotide (NAMN) and 5,6-dimethylbenzimidazole (DMB). The chain is Nicotinate-nucleotide--dimethylbenzimidazole phosphoribosyltransferase from Rhizobium meliloti (strain 1021) (Ensifer meliloti).